We begin with the raw amino-acid sequence, 560 residues long: DNA ligase B (560 aa).

Catalysis depends on K124, which acts as the N6-AMP-lysine intermediate.

This sequence belongs to the NAD-dependent DNA ligase family. LigB subfamily.

The catalysed reaction is NAD(+) + (deoxyribonucleotide)n-3'-hydroxyl + 5'-phospho-(deoxyribonucleotide)m = (deoxyribonucleotide)n+m + AMP + beta-nicotinamide D-nucleotide.. Functionally, catalyzes the formation of phosphodiester linkages between 5'-phosphoryl and 3'-hydroxyl groups in double-stranded DNA using NAD as a coenzyme and as the energy source for the reaction. This is DNA ligase B from Escherichia coli O157:H7.